The following is a 96-amino-acid chain: Co-chaperonin GroES (96 aa).

This sequence belongs to the GroES chaperonin family. In terms of assembly, heptamer of 7 subunits arranged in a ring. Interacts with the chaperonin GroEL.

The protein resides in the cytoplasm. Functionally, together with the chaperonin GroEL, plays an essential role in assisting protein folding. The GroEL-GroES system forms a nano-cage that allows encapsulation of the non-native substrate proteins and provides a physical environment optimized to promote and accelerate protein folding. GroES binds to the apical surface of the GroEL ring, thereby capping the opening of the GroEL channel. The polypeptide is Co-chaperonin GroES (Neisseria meningitidis serogroup A / serotype 4A (strain DSM 15465 / Z2491)).